A 129-amino-acid chain; its full sequence is Glycine cleavage system H protein (129 aa).

A Lipoyl-binding domain is found at 24-106; that stretch reads TFTVGISEHA…YGDGWLFRIK (83 aa). Lys65 carries the post-translational modification N6-lipoyllysine.

Belongs to the GcvH family. As to quaternary structure, the glycine cleavage system is composed of four proteins: P, T, L and H. (R)-lipoate serves as cofactor.

In terms of biological role, the glycine cleavage system catalyzes the degradation of glycine. The H protein shuttles the methylamine group of glycine from the P protein to the T protein. The protein is Glycine cleavage system H protein of Pseudoalteromonas atlantica (strain T6c / ATCC BAA-1087).